Consider the following 208-residue polypeptide: Ribosomal RNA large subunit methyltransferase E (208 aa).

5 residues coordinate S-adenosyl-L-methionine: glycine 63, tryptophan 65, aspartate 83, aspartate 99, and aspartate 124. Lysine 164 (proton acceptor) is an active-site residue.

It belongs to the class I-like SAM-binding methyltransferase superfamily. RNA methyltransferase RlmE family.

The protein resides in the cytoplasm. The enzyme catalyses uridine(2552) in 23S rRNA + S-adenosyl-L-methionine = 2'-O-methyluridine(2552) in 23S rRNA + S-adenosyl-L-homocysteine + H(+). Functionally, specifically methylates the uridine in position 2552 of 23S rRNA at the 2'-O position of the ribose in the fully assembled 50S ribosomal subunit. The polypeptide is Ribosomal RNA large subunit methyltransferase E (Salmonella typhi).